The sequence spans 138 residues: Ribulose bisphosphate carboxylase small subunit (138 aa).

The protein belongs to the RuBisCO small chain family. In terms of assembly, heterohexadecamer of 8 large and 8 small subunits.

Its subcellular location is the plastid. The protein localises to the chloroplast. RuBisCO catalyzes two reactions: the carboxylation of D-ribulose 1,5-bisphosphate, the primary event in carbon dioxide fixation, as well as the oxidative fragmentation of the pentose substrate in the photorespiration process. Both reactions occur simultaneously and in competition at the same active site. Although the small subunit is not catalytic it is essential for maximal activity. Carbon dioxide and oxygen bind in the same pocket of the enzyme in a similar manner. The polypeptide is Ribulose bisphosphate carboxylase small subunit (Galdieria sulphuraria (Red alga)).